An 862-amino-acid chain; its full sequence is Taxadiene synthase (862 aa).

Mg(2+) is bound by residues aspartate 613, aspartate 617, asparagine 757, threonine 761, and glutamate 765. A DDXXD motif motif is present at residues 613-617 (DDMAD).

It belongs to the terpene synthase family. Mg(2+) serves as cofactor.

It carries out the reaction (2E,6E,10E)-geranylgeranyl diphosphate = taxa-4(5),11(12)-diene + diphosphate. Its pathway is alkaloid biosynthesis; taxol biosynthesis; taxa-4(20),11-dien-5alpha-ol from geranylgeranyl diphosphate: step 1/2. Catalyzes the cyclization of the ubiquitous isoprenoid intermediate geranylgeranyl diphosphate to taxa-4,11-diene, the parent olefin with a taxane skeleton. The protein is Taxadiene synthase (TDC1) of Taxus brevifolia (Pacific yew).